Here is a 325-residue protein sequence, read N- to C-terminus: MSPTESPGTTTLRHRTVLLDEAVDALVWRPDGAYVDGTFGRGGHSRAVLARLGPAGTLVAFDKDPAAIAEAGTIKDARFSIEHASFAEMGDRLAGRGPVAGVLLDLGISSPQIDEAARGFSFRFEGPLDMRMDTTRGITAAEWLAQADEQDIARVIRDYGEERFALQIAKAIVARRRESGDGGALATTSDLAALVAKAVKTREKGQDPATRTFQALRIYINQELEDLERGLKAAYELLQVGGRLVVISFHSLEDRIVKRFMQAHARPERDADPALRRAPLRAADLPQPTMKLLGRFKPGAEEVAGNPRARSAVMRVAEKLGEQSA.

S-adenosyl-L-methionine contacts are provided by residues 42 to 44 (GGH), Asp62, Phe86, Asp105, and Gln112.

The protein belongs to the methyltransferase superfamily. RsmH family.

Its subcellular location is the cytoplasm. It catalyses the reaction cytidine(1402) in 16S rRNA + S-adenosyl-L-methionine = N(4)-methylcytidine(1402) in 16S rRNA + S-adenosyl-L-homocysteine + H(+). Functionally, specifically methylates the N4 position of cytidine in position 1402 (C1402) of 16S rRNA. The polypeptide is Ribosomal RNA small subunit methyltransferase H (Cupriavidus metallidurans (strain ATCC 43123 / DSM 2839 / NBRC 102507 / CH34) (Ralstonia metallidurans)).